Reading from the N-terminus, the 347-residue chain is GMP reductase (347 aa).

108–131 (ADFVKMQQILALSPGLKFICIDVA) is an NADP(+) binding site. Residues glycine 181 and glycine 183 each contribute to the K(+) site. Cysteine 186 functions as the Thioimidate intermediate in the catalytic mechanism. 216–239 (IVSDGGCSVPGDVAKAFGGGADFV) is a binding site for NADP(+).

The protein belongs to the IMPDH/GMPR family. GuaC type 1 subfamily. Homotetramer.

The enzyme catalyses IMP + NH4(+) + NADP(+) = GMP + NADPH + 2 H(+). In terms of biological role, catalyzes the irreversible NADPH-dependent deamination of GMP to IMP. It functions in the conversion of nucleobase, nucleoside and nucleotide derivatives of G to A nucleotides, and in maintaining the intracellular balance of A and G nucleotides. The chain is GMP reductase from Serratia proteamaculans (strain 568).